We begin with the raw amino-acid sequence, 444 residues long: MRLTRTRLCSLLVALYCLFSIYAAYHVFFGRRRRPLGTTSRNSRKAAAAQAKERRGREQSALESEEWNPWEGDEKNEQRHRVKTNLQILNKSTKEKIEHRVQIWGKAAIGLYLWEHIFEGTLDPADVTAQWREGQSVVGRTHYSFITGPAVVPGYFSIDVDNVVLVLNGREKAKIFHATQWLIYAQNLMKTQKLQHLAVVLLGNEHCENDWIMQFLKRNGGFVDLLFITYDSPWINGADILQWPLGVATYRQFPVVEASWTMLHDERPYICNFLGTAYENSSRQALMNILKQDGNDKLCWVSAREQWQPQETNESLKNYQDALLHSDLTLCPVGVNTECYRIYEACSFGSIPVVEDVMTAGHCGNTTSQHSAPLQLLKAMGAPFIFIKNWKELPAILEKEKTISLQEKIQRRKVLLHWYQHFKTELKWKFTKILESSFFINNKV.

The Cytoplasmic segment spans residues 1–9 (MRLTRTRLC). Residues 10-30 (SLLVALYCLFSIYAAYHVFFG) traverse the membrane as a helical; Signal-anchor for type II membrane protein segment. The Extracellular portion of the chain corresponds to 31-444 (RRRRPLGTTS…ESSFFINNKV (414 aa)). Residues 38–79 (TTSRNSRKAAAAQAKERRGREQSALESEEWNPWEGDEKNEQR) are disordered. A compositionally biased stretch (basic and acidic residues) spans 51-60 (AKERRGREQS).

It belongs to the RXYLT1 family. Forms a complex composed of FKTN/fukutin, FKRP and RXYLT1/TMEM5.

It is found in the golgi apparatus membrane. The catalysed reaction is 3-O-[Rib-ol-P-Rib-ol-P-3-beta-D-GalNAc-(1-&gt;3)-beta-D-GlcNAc-(1-&gt;4)-(O-6-P-alpha-D-Man)]-Thr-[protein] + UDP-alpha-D-xylose = 3-O-[beta-D-Xyl-(1-&gt;4)-Rib-ol-P-Rib-ol-P-3-beta-D-GalNAc-(1-&gt;3)-beta-D-GlcNAc-(1-&gt;4)-(O-6-P-alpha-D-Man)]-Thr-[protein] + UDP + H(+). It participates in protein modification; protein glycosylation. In terms of biological role, acts as a UDP-D-xylose:ribitol-5-phosphate beta1,4-xylosyltransferase, which catalyzes the transfer of UDP-D-xylose to ribitol 5-phosphate (Rbo5P) to form the Xylbeta1-4Rbo5P linkage on O-mannosyl glycan. Participates in the biosynthesis of the phosphorylated O-mannosyl trisaccharide (N-acetylgalactosamine-beta-3-N-acetylglucosamine-beta-4-(phosphate-6-)mannose), a carbohydrate structure present in alpha-dystroglycan (DAG1), which is required for binding laminin G-like domain-containing extracellular proteins with high affinity. The protein is Ribitol-5-phosphate xylosyltransferase 1 of Mus musculus (Mouse).